The primary structure comprises 403 residues: S-adenosylmethionine synthase (403 aa).

Residue His14 participates in ATP binding. Residue Asp16 coordinates Mg(2+). Glu42 serves as a coordination point for K(+). 2 residues coordinate L-methionine: Glu55 and Gln99. Residues 99-109 (QSPEIAEGVDH) form a flexible loop region. Residues 180 to 182 (DAK), 250 to 251 (RF), Asp259, 265 to 266 (RK), Ala282, and Lys286 each bind ATP. Asp259 serves as a coordination point for L-methionine. Residue Lys290 coordinates L-methionine.

Belongs to the AdoMet synthase family. As to quaternary structure, homotetramer; dimer of dimers. The cofactor is Mg(2+). K(+) is required as a cofactor.

The protein resides in the cytoplasm. The catalysed reaction is L-methionine + ATP + H2O = S-adenosyl-L-methionine + phosphate + diphosphate. It participates in amino-acid biosynthesis; S-adenosyl-L-methionine biosynthesis; S-adenosyl-L-methionine from L-methionine: step 1/1. In terms of biological role, catalyzes the formation of S-adenosylmethionine (AdoMet) from methionine and ATP. The overall synthetic reaction is composed of two sequential steps, AdoMet formation and the subsequent tripolyphosphate hydrolysis which occurs prior to release of AdoMet from the enzyme. The polypeptide is S-adenosylmethionine synthase (Deinococcus deserti (strain DSM 17065 / CIP 109153 / LMG 22923 / VCD115)).